Reading from the N-terminus, the 380-residue chain is Endopolygalacturonase AN8327 (380 aa).

Residues 1–19 form the signal peptide; that stretch reads MFYALGPLALFAFATEVMA. The propeptide occupies 20-35; that stretch reads TPVAYPMTTASPTLAK. An intrachain disulfide couples cysteine 39 to cysteine 57. PbH1 repeat units lie at residues 147 to 169, 170 to 200, 201 to 222, 223 to 243, 252 to 273, 281 to 303, and 315 to 338; these read LTDS…SING, CDGL…DIGE, SSNV…AVNS, GTSI…SIGS, VDTV…RIKA, IKGV…LIEQ, and TSGI…DSDG. Catalysis depends on aspartate 215, which acts as the Proton donor. Cysteine 217 and cysteine 233 are disulfide-bonded. The active site involves histidine 237. A glycan (N-linked (GlcNAc...) asparagine) is linked at asparagine 327. A disulfide bridge connects residues cysteine 345 and cysteine 350. Asparagine 352 carries N-linked (GlcNAc...) asparagine glycosylation. An intrachain disulfide couples cysteine 369 to cysteine 378.

This sequence belongs to the glycosyl hydrolase 28 family.

It localises to the secreted. The enzyme catalyses (1,4-alpha-D-galacturonosyl)n+m + H2O = (1,4-alpha-D-galacturonosyl)n + (1,4-alpha-D-galacturonosyl)m.. Functionally, involved in maceration and soft-rotting of plant tissue. Hydrolyzes the 1,4-alpha glycosidic bonds of de-esterified pectate in the smooth region of the plant cell wall. In Emericella nidulans (strain FGSC A4 / ATCC 38163 / CBS 112.46 / NRRL 194 / M139) (Aspergillus nidulans), this protein is Endopolygalacturonase AN8327.